Consider the following 466-residue polypeptide: Ribulose bisphosphate carboxylase large chain (466 aa).

N6,N6,N6-trimethyllysine is present on K5. Substrate-binding residues include N114 and T164. Catalysis depends on K166, which acts as the Proton acceptor. Position 168 (K168) interacts with substrate. Positions 192, 194, and 195 each coordinate Mg(2+). The residue at position 192 (K192) is an N6-carboxylysine. H285 functions as the Proton acceptor in the catalytic mechanism. Residues R286, H318, and S370 each contribute to the substrate site.

The protein belongs to the RuBisCO large chain family. Type I subfamily. As to quaternary structure, heterohexadecamer of 8 large chains and 8 small chains; disulfide-linked. The disulfide link is formed within the large subunit homodimers. Mg(2+) is required as a cofactor. In terms of processing, the disulfide bond which can form in the large chain dimeric partners within the hexadecamer appears to be associated with oxidative stress and protein turnover.

Its subcellular location is the plastid. The protein localises to the chloroplast. The catalysed reaction is 2 (2R)-3-phosphoglycerate + 2 H(+) = D-ribulose 1,5-bisphosphate + CO2 + H2O. The enzyme catalyses D-ribulose 1,5-bisphosphate + O2 = 2-phosphoglycolate + (2R)-3-phosphoglycerate + 2 H(+). Its function is as follows. RuBisCO catalyzes two reactions: the carboxylation of D-ribulose 1,5-bisphosphate, the primary event in carbon dioxide fixation, as well as the oxidative fragmentation of the pentose substrate in the photorespiration process. Both reactions occur simultaneously and in competition at the same active site. The chain is Ribulose bisphosphate carboxylase large chain from Drosera filiformis (Thread-leaved sundew).